We begin with the raw amino-acid sequence, 390 residues long: LIM/homeobox protein Lhx4 (390 aa).

2 LIM zinc-binding domains span residues 28 to 87 (PQCA…RFGT) and 88 to 150 (KCTA…AKQN). A DNA-binding region (homeobox) is located at residues 157–216 (AKRPRTTITAKQLETLKNAYKNSPKPARHVREQLSSETGLDMRVVQVWFQNRRAKEKRLK). Positions 161-181 (RTTITAKQLETLKNAYKNSPK) are interaction with DNA. Residues 199-211 (RVVQVWFQNRRAK) are interaction with 5-mCpG DNA. Disordered regions lie at residues 230 to 253 (SVKR…GVSD) and 356 to 390 (AGGP…HPPF).

It is found in the nucleus. Functionally, may play a critical role in the development of respiratory control mechanisms and in the normal growth and maturation of the lung. Binds preferentially to methylated DNA. This is LIM/homeobox protein Lhx4 (LHX4) from Homo sapiens (Human).